The following is a 396-amino-acid chain: Elongation factor Tu 2 (396 aa).

A tr-type G domain is found at 10–206 (KLHVNVGTIG…ALDTFIPDPT (197 aa)). Residues 19 to 26 (GHVDHGKT) form a G1 region. A GTP-binding site is contributed by 19 to 26 (GHVDHGKT). A Mg(2+)-binding site is contributed by threonine 26. The segment at 60–64 (GITIS) is G2. Residues 81-84 (DCPG) are G3. GTP-binding positions include 81–85 (DCPGH) and 136–139 (NKAD). A G4 region spans residues 136-139 (NKAD). The interval 174 to 176 (SAR) is G5.

Belongs to the TRAFAC class translation factor GTPase superfamily. Classic translation factor GTPase family. EF-Tu/EF-1A subfamily. Monomer.

It localises to the cytoplasm. The enzyme catalyses GTP + H2O = GDP + phosphate + H(+). Functionally, GTP hydrolase that promotes the GTP-dependent binding of aminoacyl-tRNA to the A-site of ribosomes during protein biosynthesis. The chain is Elongation factor Tu 2 from Xanthomonas campestris pv. campestris (strain 8004).